A 469-amino-acid polypeptide reads, in one-letter code: Probable Xaa-Pro aminopeptidase PEPP (469 aa).

Residues Asp-265, Asp-276, Glu-399, and Glu-439 each contribute to the Mn(2+) site.

The protein belongs to the peptidase M24B family. It depends on Mn(2+) as a cofactor.

It carries out the reaction Release of any N-terminal amino acid, including proline, that is linked to proline, even from a dipeptide or tripeptide.. Functionally, catalyzes the removal of a penultimate prolyl residue from the N-termini of peptides. The protein is Probable Xaa-Pro aminopeptidase PEPP (PEPP) of Coccidioides posadasii (strain RMSCC 757 / Silveira) (Valley fever fungus).